Here is a 1030-residue protein sequence, read N- to C-terminus: Alpha-L-rhamnosidase (1030 aa).

The interval 133–297 (PSLEGSSWIW…GAGPWGRVAP (165 aa)) is carbohydrate-binding module-67 (CBM67). D179 and N180 together coordinate Ca(2+). Alpha-L-rhamnose-binding positions include 179–180 (DN) and W203. N228 and P233 together coordinate Ca(2+). Alpha-L-rhamnose-binding positions include D630, 634–636 (RDE), D643, and W695. The active-site Proton donor is the E636. Residue E895 is the Proton acceptor of the active site. H916 contributes to the alpha-L-rhamnose binding site.

It belongs to the glycosyl hydrolase 78 family.

It catalyses the reaction Hydrolysis of terminal non-reducing alpha-L-rhamnose residues in alpha-L-rhamnosides.. In terms of biological role, alpha-L-rhamnosidase which is able to degrade p-nitrophenyl-alpha-L-rhamnopyranoside (PNP-Rha) in vitro. Releases L-rhamnose from citrus flavonoids such as naringin, rutin and hesperidin, and the arabinogalactan-protein (AGP) gum arabic. AGPs are a family of proteoglycans that are localized on the cell surfaces of higher plants. Cleaves both the alpha-1,6 and the alpha-1,2-linked rhamnosyl residues. The sequence is that of Alpha-L-rhamnosidase from Streptomyces avermitilis (strain ATCC 31267 / DSM 46492 / JCM 5070 / NBRC 14893 / NCIMB 12804 / NRRL 8165 / MA-4680).